The primary structure comprises 114 residues: uncharacterized protein (114 aa).

It localises to the mitochondrion. This is an uncharacterized protein from Arabidopsis thaliana (Mouse-ear cress).